A 307-amino-acid chain; its full sequence is MTTSPTPFKTVRDLVRHAVSRFSQAKLAFGHGSDNAFDEAVYLVLHTLHLPLDTLEPFLDARLAPDEIDAVLAVIERRATERVPAAYLTREAWMHGHRFYVDERVIVPRSFIGELLDDGLQPYVEDPELVGSVLELCTGSGCLAILAALAFPNASVDAVDLSADALAVAKINRDNYGLDERIALYHGDLYAPLPQFKWIDPAQRYDVIIANPPYVNAGSMAELPAEYRHEPEMALAGGADGMDIVRRIIGEARRWLQDDGVLVVEIGNERANVEAAFGGLELVWLPTSAGDGSVFLIHASELPAVAG.

It belongs to the protein N5-glutamine methyltransferase family. PrmB subfamily.

It carries out the reaction L-glutaminyl-[ribosomal protein uL3] + S-adenosyl-L-methionine = N(5)-methyl-L-glutaminyl-[ribosomal protein uL3] + S-adenosyl-L-homocysteine + H(+). Its function is as follows. Methylates large ribosomal subunit protein uL3 on a specific glutamine residue. In Burkholderia pseudomallei (strain K96243), this protein is Ribosomal protein uL3 glutamine methyltransferase.